The chain runs to 394 residues: Elongation factor Tu (394 aa).

The region spanning 10-204 is the tr-type G domain; that stretch reads KPHINVGTIG…HLDNYIPEPK (195 aa). The G1 stretch occupies residues 19–26; that stretch reads GHVDHGKT. 19–26 is a binding site for GTP; sequence GHVDHGKT. T26 contributes to the Mg(2+) binding site. The segment at 60-64 is G2; that stretch reads GITIN. Residues 81 to 84 are G3; it reads DCPG. Residues 81-85 and 136-139 contribute to the GTP site; these read DCPGH and NKCD. Residues 136 to 139 are G4; sequence NKCD. The segment at 174–176 is G5; the sequence is SAL.

This sequence belongs to the TRAFAC class translation factor GTPase superfamily. Classic translation factor GTPase family. EF-Tu/EF-1A subfamily. Monomer.

Its subcellular location is the cytoplasm. The enzyme catalyses GTP + H2O = GDP + phosphate + H(+). Functionally, GTP hydrolase that promotes the GTP-dependent binding of aminoacyl-tRNA to the A-site of ribosomes during protein biosynthesis. This Wigglesworthia glossinidia brevipalpis protein is Elongation factor Tu.